The sequence spans 164 residues: UPF0304 protein YfbU (164 aa).

It belongs to the UPF0304 family.

The polypeptide is UPF0304 protein YfbU (Escherichia coli O127:H6 (strain E2348/69 / EPEC)).